An 877-amino-acid chain; its full sequence is Alpha-glucosidase (877 aa).

The first 23 residues, 1–23 (MATVGVLLLCLCLCLFAPRLCSS), serve as a signal peptide directing secretion. The segment at 89–115 (VPQDIIPRPAPGDVLHDAPPASSAPLQ) is disordered. Residues asparagine 191, asparagine 298, asparagine 338, and asparagine 391 are each glycosylated (N-linked (GlcNAc...) asparagine). Catalysis depends on residues aspartate 437 and glutamate 440. A glycan (N-linked (GlcNAc...) asparagine) is linked at asparagine 471. Catalysis depends on aspartate 534, which acts as the Proton donor. Asparagine 570 carries N-linked (GlcNAc...) asparagine glycosylation.

This sequence belongs to the glycosyl hydrolase 31 family. High levels seen in the aleurone and scutellum after germination, while low levels are found in developing seeds.

It catalyses the reaction Hydrolysis of terminal, non-reducing (1-&gt;4)-linked alpha-D-glucose residues with release of alpha-D-glucose.. This Hordeum vulgare (Barley) protein is Alpha-glucosidase.